We begin with the raw amino-acid sequence, 199 residues long: Melanocortin-2 receptor accessory protein 2B (199 aa).

A glycan (N-linked (GlcNAc...) asparagine) is linked at Asn6. A helical membrane pass occupies residues 39-59 (IVIGFWVGLAVFVIFMFFVLT).

It belongs to the MRAP family. Interacts with mc4r. In terms of tissue distribution, expressed in adult brain.

The protein localises to the cell membrane. It is found in the endoplasmic reticulum membrane. In terms of biological role, activator of melanocortin receptor 4 (mc4r), a receptor involved in energy homeostasis. Plays a role after larval development in the control of energy homeostasis and body weight regulation by increasing ligand-sensitivity of mc4r and mc4r-mediated generation of cAMP once the zebrafish begins feeding, increasing the capacity for regulated feeding and growth. The protein is Melanocortin-2 receptor accessory protein 2B (mrap2b) of Danio rerio (Zebrafish).